A 255-amino-acid polypeptide reads, in one-letter code: Increased copper sensitivity protein 2 (255 aa).

Residues 1 to 12 (MGKFEQKERERI) are compositionally biased toward basic and acidic residues. Disordered stretches follow at residues 1 to 32 (MGKFEQKERERISTFSFPTTGSQSSTSIKSLG) and 82 to 142 (PGDK…RKSH). A compositionally biased stretch (polar residues) spans 13–30 (STFSFPTTGSQSSTSIKS). Positions 131–142 (SGRRKSYHRKSH) are enriched in basic residues. Position 217 is a phosphoserine (Ser217).

In Saccharomyces cerevisiae (strain ATCC 204508 / S288c) (Baker's yeast), this protein is Increased copper sensitivity protein 2 (ICS2).